A 556-amino-acid chain; its full sequence is 2,3-bisphosphoglycerate-independent phosphoglycerate mutase (556 aa).

Mn(2+) contacts are provided by D25 and S78. S78 functions as the Phosphoserine intermediate in the catalytic mechanism. Substrate is bound by residues H137, 167–168 (RD), R203, R210, 283–286 (RADR), and K358. D427, H431, D468, H469, and H498 together coordinate Mn(2+).

It belongs to the BPG-independent phosphoglycerate mutase family. Monomer. It depends on Mn(2+) as a cofactor. In terms of tissue distribution, found ubiquitously in germinating seed.

Its subcellular location is the cytoplasm. It catalyses the reaction (2R)-2-phosphoglycerate = (2R)-3-phosphoglycerate. It functions in the pathway carbohydrate degradation; glycolysis; pyruvate from D-glyceraldehyde 3-phosphate: step 3/5. Functionally, catalyzes the interconversion of 2-phosphoglycerate and 3-phosphoglycerate. This chain is 2,3-bisphosphoglycerate-independent phosphoglycerate mutase, found in Ricinus communis (Castor bean).